A 197-amino-acid polypeptide reads, in one-letter code: uncharacterized protein (197 aa).

4 helical membrane passes run 9–29, 67–87, 104–124, and 160–180; these read IYIL…RFIL, LASL…ILML, IIAV…ISVI, and GLDL…MLVI.

It belongs to the YggT family.

The protein resides in the cell membrane. This is an uncharacterized protein from Pseudomonas aeruginosa (strain ATCC 15692 / DSM 22644 / CIP 104116 / JCM 14847 / LMG 12228 / 1C / PRS 101 / PAO1).